Here is a 155-residue protein sequence, read N- to C-terminus: Protein FAM201A (155 aa).

The disordered stretch occupies residues 130–155; the sequence is QDQGCGQHRPHSPRLVDIALPGGGWT.

The chain is Protein FAM201A (FAM201A) from Homo sapiens (Human).